The following is a 259-amino-acid chain: 4-hydroxy-tetrahydrodipicolinate reductase (259 aa).

NAD(+) is bound by residues 9–14 and E35; that span reads GAGGRM. NADP(+) is bound at residue R36. NAD(+)-binding positions include 92–94 and 116–119; these read GTT and APNM. The active-site Proton donor/acceptor is the H149. (S)-2,3,4,5-tetrahydrodipicolinate is bound at residue H150. The Proton donor role is filled by K153. A (S)-2,3,4,5-tetrahydrodipicolinate-binding site is contributed by 159 to 160; it reads GT.

It belongs to the DapB family.

It localises to the cytoplasm. It carries out the reaction (S)-2,3,4,5-tetrahydrodipicolinate + NAD(+) + H2O = (2S,4S)-4-hydroxy-2,3,4,5-tetrahydrodipicolinate + NADH + H(+). The enzyme catalyses (S)-2,3,4,5-tetrahydrodipicolinate + NADP(+) + H2O = (2S,4S)-4-hydroxy-2,3,4,5-tetrahydrodipicolinate + NADPH + H(+). It participates in amino-acid biosynthesis; L-lysine biosynthesis via DAP pathway; (S)-tetrahydrodipicolinate from L-aspartate: step 4/4. Functionally, catalyzes the conversion of 4-hydroxy-tetrahydrodipicolinate (HTPA) to tetrahydrodipicolinate. The polypeptide is 4-hydroxy-tetrahydrodipicolinate reductase (Oleidesulfovibrio alaskensis (strain ATCC BAA-1058 / DSM 17464 / G20) (Desulfovibrio alaskensis)).